We begin with the raw amino-acid sequence, 245 residues long: 2,3-bisphosphoglycerate-dependent phosphoglycerate mutase (245 aa).

Residues 8 to 15 (RHGQSLWN), 21 to 22 (TG), arginine 60, 87 to 90 (ERHY), lysine 98, 114 to 115 (RR), and 183 to 184 (GN) each bind substrate. The active-site Tele-phosphohistidine intermediate is the histidine 9. Glutamate 87 serves as the catalytic Proton donor/acceptor.

This sequence belongs to the phosphoglycerate mutase family. BPG-dependent PGAM subfamily.

The enzyme catalyses (2R)-2-phosphoglycerate = (2R)-3-phosphoglycerate. The protein operates within carbohydrate degradation; glycolysis; pyruvate from D-glyceraldehyde 3-phosphate: step 3/5. Its function is as follows. Catalyzes the interconversion of 2-phosphoglycerate and 3-phosphoglycerate. The sequence is that of 2,3-bisphosphoglycerate-dependent phosphoglycerate mutase from Bacillus cytotoxicus (strain DSM 22905 / CIP 110041 / 391-98 / NVH 391-98).